Consider the following 436-residue polypeptide: 3-ketoacyl-CoA thiolase (436 aa).

C99 serves as the catalytic Acyl-thioester intermediate. Active-site proton acceptor residues include H392 and C422.

It belongs to the thiolase-like superfamily. Thiolase family. In terms of assembly, heterotetramer of two alpha chains (FadJ) and two beta chains (FadI).

It localises to the cytoplasm. The catalysed reaction is an acyl-CoA + acetyl-CoA = a 3-oxoacyl-CoA + CoA. Its pathway is lipid metabolism; fatty acid beta-oxidation. Functionally, catalyzes the final step of fatty acid oxidation in which acetyl-CoA is released and the CoA ester of a fatty acid two carbons shorter is formed. The protein is 3-ketoacyl-CoA thiolase of Shigella dysenteriae serotype 1 (strain Sd197).